A 254-amino-acid polypeptide reads, in one-letter code: MKFWGSVLALSFVVFLFLTGTLAQNVGSIVTSDLFDQMLKNRNDARCFAVRFYTYDAFIAAANSFPGFGTTGDDTARKKEIAAFFGQTSHETTGGTLSPDGPYAGGYCFLREGNQMGNGYYGRGPIQLTGQSNYDLAGKAIEQDLVNNPDLVATDATVSFKTAIWFWMTPQGNKPSCHDVITGRWTPSAADTSANRVPGYGVITNIINGGIECGKGQNARVEDRIGYYRRNVSIMNVAPGDNLDCYNQRNFAEV.

An N-terminal signal peptide occupies residues 1–23 (MKFWGSVLALSFVVFLFLTGTLA). Catalysis depends on Glu91, which acts as the Proton donor. Cys213 and Cys245 form a disulfide bridge.

Belongs to the glycosyl hydrolase 19 family. Chitinase class II subfamily.

The protein resides in the secreted. The enzyme catalyses Random endo-hydrolysis of N-acetyl-beta-D-glucosaminide (1-&gt;4)-beta-linkages in chitin and chitodextrins.. Functionally, defense against chitin-containing fungal pathogens. This Petunia hybrida (Petunia) protein is Acidic endochitinase.